Reading from the N-terminus, the 910-residue chain is Lysine-specific demethylase 7 homolog (910 aa).

A compositionally biased stretch (polar residues) spans Met1 to Asn11. 3 disordered regions span residues Met1–Pro58, Asn103–Pro162, and Gln183–Gly212. A compositionally biased stretch (basic and acidic residues) spans Gln25–Ala35. Positions Tyr43 to Pro58 are enriched in polar residues. The span at Pro118 to Asp130 shows a compositional bias: basic and acidic residues. The segment covering Glu150–Ser160 has biased composition (polar residues). Positions Pro200–Arg210 are enriched in basic and acidic residues. The PHD-type zinc-finger motif lies at Ser208–His290. The region spanning Ser441–Asn612 is the JmjC domain. Residues Thr505 to Asp510, Tyr518, Lys525, and His580 each bind substrate. Fe cation contacts are provided by His508 and Asp510. Residue His580 coordinates Fe cation. Disordered regions lie at residues Lys712–Val790 and Glu864–Met910. Over residues Tyr748–Lys757 the composition is skewed to basic residues. Residues Lys758–Pro780 show a composition bias toward basic and acidic residues.

Belongs to the JHDM1 histone demethylase family. JHDM1D subfamily. Requires Fe(2+) as cofactor. In terms of tissue distribution, mainly expressed in neurons. Also weakly expressed in some muscle, intestinal and hypodermal cells.

It is found in the nucleus. Competitively inhibited by 2-hydroxyglutarate. Functionally, histone demethylase required for nervous system development. Specifically demethylates dimethylated 'Lys-9', 'Lys-23' and 'Lys-27' (H3K9me2, H3K23me2 and H3K27me2, respectively) of histone H3, thereby playing a central role in histone code. Promotes mitochondrial stress-induced longevity. The protein is Lysine-specific demethylase 7 homolog (jmjd-1.2) of Caenorhabditis elegans.